The following is a 67-amino-acid chain: Large ribosomal subunit protein eL24 (67 aa).

Residues C7, C10, C33, and C37 each contribute to the Zn(2+) site. The C4-type zinc finger occupies 7–37; sequence CDYCGTDIEPGTGTMFVHKDGATTHFCSSKC. The span at 48–60 shows a compositional bias: basic and acidic residues; sequence RNLEWTDTARGEA. The disordered stretch occupies residues 48–67; that stretch reads RNLEWTDTARGEAGEAEDEA.

It belongs to the eukaryotic ribosomal protein eL24 family. As to quaternary structure, part of the 50S ribosomal subunit. Forms a cluster with proteins L3 and L14. Requires Zn(2+) as cofactor.

Binds to the 23S rRNA. In Haloarcula marismortui (strain ATCC 43049 / DSM 3752 / JCM 8966 / VKM B-1809) (Halobacterium marismortui), this protein is Large ribosomal subunit protein eL24 (rpl24e).